Reading from the N-terminus, the 516-residue chain is Protein P54 (516 aa).

The first 27 residues, 1 to 27 (MKKSLLSAVMLSSIALTAVGSPIAAAA), serve as a signal peptide directing secretion. Residues 208-397 (ATAEDKKADL…PAPAPAPNPS (190 aa)) form a disordered region. Over residues 210–236 (AEDKKADLNRKKAEAEAEQARIREQAR) the composition is skewed to basic and acidic residues. 2 stretches are compositionally biased toward low complexity: residues 237–247 (LAEQARQQAAQ) and 257–380 (QAAA…TVTP). A compositionally biased stretch (pro residues) spans 381-395 (APTPTPTPAPAPAPN). Residues 399–516 (SVNGAAIVAE…WYTPDFAVSM (118 aa)) enclose the NlpC/P60 domain. The active-site Nucleophile is the Cys429. His480 (proton acceptor) is an active-site residue. Residue His492 is part of the active site.

Belongs to the peptidase C40 family.

It is found in the secreted. The protein resides in the cell wall. In Enterococcus faecium (Streptococcus faecium), this protein is Protein P54.